The following is a 60-amino-acid chain: Serum basic protease inhibitor (60 aa).

A BPTI/Kunitz inhibitor domain is found at 7 to 57; the sequence is CLEPPYTGPCKAAMIRYFYNAKAGFCETFVYGGCRAKSNNFKSAEDCMRTC. 3 disulfides stabilise this stretch: Cys-7–Cys-57, Cys-16–Cys-40, and Cys-32–Cys-53.

Its subcellular location is the secreted. In terms of biological role, this inhibitor has activity very similar to that of the basic protease inhibitor from bovine tissues. The chain is Serum basic protease inhibitor from Bos taurus (Bovine).